The primary structure comprises 175 residues: ATP-dependent protease subunit HslV (175 aa).

Thr-2 is a catalytic residue. The Na(+) site is built by Gly-158, Cys-161, and Thr-164.

This sequence belongs to the peptidase T1B family. HslV subfamily. A double ring-shaped homohexamer of HslV is capped on each side by a ring-shaped HslU homohexamer. The assembly of the HslU/HslV complex is dependent on binding of ATP.

The protein resides in the cytoplasm. It carries out the reaction ATP-dependent cleavage of peptide bonds with broad specificity.. With respect to regulation, allosterically activated by HslU binding. Its function is as follows. Protease subunit of a proteasome-like degradation complex believed to be a general protein degrading machinery. The sequence is that of ATP-dependent protease subunit HslV from Haemophilus influenzae (strain ATCC 51907 / DSM 11121 / KW20 / Rd).